We begin with the raw amino-acid sequence, 86 residues long: Neuropeptide-like 3 (86 aa).

The N-terminal stretch at 1–16 (MFKLCVFVALLSLAAA) is a signal peptide. 2 consecutive propeptides follow at residues 17 to 50 (APAP…VAPQ) and 63 to 75 (AITQ…LLIK). Ile-85 carries the post-translational modification Isoleucine amide.

It localises to the secreted. This Drosophila yakuba (Fruit fly) protein is Neuropeptide-like 3 (Nplp3).